Here is a 622-residue protein sequence, read N- to C-terminus: Apical membrane antigen 1 (622 aa).

The N-terminal stretch at 1 to 24 is a signal peptide; the sequence is MRKLYCVLLLSAFEFTYMINFGRG. Residues 25-546 lie on the Extracellular side of the membrane; sequence QNYWEHPYQK…EHKPTYDKMK (522 aa). 5 cysteine pairs are disulfide-bonded: Cys-149/Cys-302, Cys-217/Cys-247, Cys-263/Cys-275, Cys-320/Cys-418, and Cys-337/Cys-409. Asn-162 carries an N-linked (GlcNAc...) asparagine glycan. 5 N-linked (GlcNAc...) asparagine glycosylation sites follow: Asn-286, Asn-371, Asn-421, Asn-422, and Asn-499. 3 disulfide bridges follow: Cys-443–Cys-502, Cys-490–Cys-507, and Cys-492–Cys-509. A helical membrane pass occupies residues 547–567; sequence IIIASSAAVAVLATILMVYLY. Topologically, residues 568–622 are cytoplasmic; that stretch reads KRKGNAEKYDKMDEPQHYGKSNSRNDEMLDPEASFWGEEKRASHTTPVLMEKPYY. The span at 578–594 shows a compositional bias: basic and acidic residues; sequence KMDEPQHYGKSNSRNDE. Residues 578 to 607 form a disordered region; that stretch reads KMDEPQHYGKSNSRNDEMLDPEASFWGEEK.

It belongs to the apicomplexan parasites AMA1 family.

The protein resides in the membrane. Functionally, involved in parasite invasion of erythrocytes. The sequence is that of Apical membrane antigen 1 (AMA-1) from Plasmodium falciparum (isolate FC27 / Papua New Guinea).